A 74-amino-acid chain; its full sequence is Small ribosomal subunit protein uS8c (74 aa).

Belongs to the universal ribosomal protein uS8 family. As to quaternary structure, part of the 30S ribosomal subunit.

The protein resides in the plastid. It localises to the chloroplast. Its function is as follows. One of the primary rRNA binding proteins, it binds directly to 16S rRNA central domain where it helps coordinate assembly of the platform of the 30S subunit. This chain is Small ribosomal subunit protein uS8c (rps8), found in Oenothera ammophila (Evening primerose).